A 71-amino-acid chain; its full sequence is Small ribosomal subunit protein bS21 (71 aa).

Belongs to the bacterial ribosomal protein bS21 family.

This Blochmanniella floridana protein is Small ribosomal subunit protein bS21.